A 236-amino-acid polypeptide reads, in one-letter code: Ribose-5-phosphate isomerase A (236 aa).

Residues 33–36 (TGST), 90–93 (DGAD), and 103–106 (KGGG) each bind substrate. Residue Glu-112 is the Proton acceptor of the active site. Residue Lys-130 coordinates substrate.

The protein belongs to the ribose 5-phosphate isomerase family. As to quaternary structure, homodimer.

The catalysed reaction is aldehydo-D-ribose 5-phosphate = D-ribulose 5-phosphate. It functions in the pathway carbohydrate degradation; pentose phosphate pathway; D-ribose 5-phosphate from D-ribulose 5-phosphate (non-oxidative stage): step 1/1. Its function is as follows. Catalyzes the reversible conversion of ribose-5-phosphate to ribulose 5-phosphate. This Nostoc sp. (strain PCC 7120 / SAG 25.82 / UTEX 2576) protein is Ribose-5-phosphate isomerase A.